Here is a 514-residue protein sequence, read N- to C-terminus: Peptide chain release factor 3 (514 aa).

Positions Lys-8–His-268 constitute a tr-type G domain. GTP contacts are provided by residues Ser-17–Thr-24, Asp-85–His-89, and Asn-139–Asp-142.

It belongs to the TRAFAC class translation factor GTPase superfamily. Classic translation factor GTPase family. PrfC subfamily.

It localises to the cytoplasm. Increases the formation of ribosomal termination complexes and stimulates activities of RF-1 and RF-2. It binds guanine nucleotides and has strong preference for UGA stop codons. It may interact directly with the ribosome. The stimulation of RF-1 and RF-2 is significantly reduced by GTP and GDP, but not by GMP. This Streptococcus mutans serotype c (strain ATCC 700610 / UA159) protein is Peptide chain release factor 3.